The primary structure comprises 184 residues: Chromophore lyase CpcS/CpeS 1 (184 aa).

Belongs to the CpcS/CpeS biliprotein lyase family.

Functionally, covalently attaches a chromophore to Cys residue(s) of phycobiliproteins. In Synechococcus sp. (strain JA-3-3Ab) (Cyanobacteria bacterium Yellowstone A-Prime), this protein is Chromophore lyase CpcS/CpeS 1.